A 425-amino-acid polypeptide reads, in one-letter code: Pectate lyase L (425 aa).

An N-terminal signal peptide occupies residues 1–25; the sequence is MKYLNCFISTGLAAFFLVNSTSVLA. Cysteine 28 and cysteine 114 are disulfide-bonded. 4 residues coordinate Ca(2+): aspartate 209, aspartate 233, aspartate 234, and aspartate 237. Lysine 273 serves as the catalytic Proton acceptor. Asparagine 402, serine 413, alanine 416, aspartate 418, and glutamate 423 together coordinate Ca(2+).

This sequence belongs to the polysaccharide lyase 9 family. Ca(2+) is required as a cofactor.

Its subcellular location is the secreted. It carries out the reaction Eliminative cleavage of (1-&gt;4)-alpha-D-galacturonan to give oligosaccharides with 4-deoxy-alpha-D-galact-4-enuronosyl groups at their non-reducing ends.. Its pathway is glycan metabolism; pectin degradation; 2-dehydro-3-deoxy-D-gluconate from pectin: step 2/5. Functionally, presents an endo-cleaving activity on polygalacturonate or partially methylated pectin. Is effective in the maceration of plant tissue, and has an important role in soft-rot disease. Is 280-fold less active against polygalacturonate than the major pectate lyase PelB. When assayed on polygalacturonate, PelL releases oligogalacturonates of different sizes; upon prolonged incubation, PelL degrades the primary products to unsaturated tetramer and pentamer in addition to unsaturated dimer and trimer. When assayed on oligogalacturonates (degrees of polymerization of 2 to 8), it preferentially forms unsaturated tetramer, and displays the highest activity on the octamer. This is Pectate lyase L (pelL) from Dickeya dadantii (strain 3937) (Erwinia chrysanthemi (strain 3937)).